A 255-amino-acid polypeptide reads, in one-letter code: Imidazole glycerol phosphate synthase subunit HisF (255 aa).

Active-site residues include Asp12 and Asp131.

It belongs to the HisA/HisF family. Heterodimer of HisH and HisF.

It localises to the cytoplasm. The catalysed reaction is 5-[(5-phospho-1-deoxy-D-ribulos-1-ylimino)methylamino]-1-(5-phospho-beta-D-ribosyl)imidazole-4-carboxamide + L-glutamine = D-erythro-1-(imidazol-4-yl)glycerol 3-phosphate + 5-amino-1-(5-phospho-beta-D-ribosyl)imidazole-4-carboxamide + L-glutamate + H(+). The protein operates within amino-acid biosynthesis; L-histidine biosynthesis; L-histidine from 5-phospho-alpha-D-ribose 1-diphosphate: step 5/9. IGPS catalyzes the conversion of PRFAR and glutamine to IGP, AICAR and glutamate. The HisF subunit catalyzes the cyclization activity that produces IGP and AICAR from PRFAR using the ammonia provided by the HisH subunit. This is Imidazole glycerol phosphate synthase subunit HisF from Salinispora arenicola (strain CNS-205).